Reading from the N-terminus, the 100-residue chain is Small ribosomal subunit protein uS14c (100 aa).

This sequence belongs to the universal ribosomal protein uS14 family. In terms of assembly, part of the 30S ribosomal subunit.

The protein localises to the plastid. The protein resides in the chloroplast. Binds 16S rRNA, required for the assembly of 30S particles. The polypeptide is Small ribosomal subunit protein uS14c (Anthoceros angustus (Hornwort)).